The following is a 518-amino-acid chain: Protein nucleotidyltransferase YdiU (518 aa).

Residues 1-10 (MTHLQFDNRL) show a composition bias toward basic and acidic residues. Residues 1–23 (MTHLQFDNRLRAQLPGDPEQGPR) are disordered. The ATP site is built by Gly100, Gly102, Arg103, Lys123, Asp135, Gly136, Arg193, and Arg200. Residue Asp270 is the Proton acceptor of the active site. Positions 271 and 280 each coordinate Mg(2+). Asp280 contributes to the ATP binding site.

Belongs to the SELO family. Mg(2+) serves as cofactor. Mn(2+) is required as a cofactor.

It carries out the reaction L-seryl-[protein] + ATP = 3-O-(5'-adenylyl)-L-seryl-[protein] + diphosphate. It catalyses the reaction L-threonyl-[protein] + ATP = 3-O-(5'-adenylyl)-L-threonyl-[protein] + diphosphate. The catalysed reaction is L-tyrosyl-[protein] + ATP = O-(5'-adenylyl)-L-tyrosyl-[protein] + diphosphate. The enzyme catalyses L-histidyl-[protein] + UTP = N(tele)-(5'-uridylyl)-L-histidyl-[protein] + diphosphate. It carries out the reaction L-seryl-[protein] + UTP = O-(5'-uridylyl)-L-seryl-[protein] + diphosphate. It catalyses the reaction L-tyrosyl-[protein] + UTP = O-(5'-uridylyl)-L-tyrosyl-[protein] + diphosphate. Its function is as follows. Nucleotidyltransferase involved in the post-translational modification of proteins. It can catalyze the addition of adenosine monophosphate (AMP) or uridine monophosphate (UMP) to a protein, resulting in modifications known as AMPylation and UMPylation. The sequence is that of Protein nucleotidyltransferase YdiU from Xanthomonas campestris pv. campestris (strain B100).